We begin with the raw amino-acid sequence, 128 residues long: Group 2 truncated hemoglobin GlbO (128 aa).

The segment at residues 23-36 is a cross-link (isodityrosine (Tyr-Tyr)); it reads YAQVAEDEVLRRVY. Tyr36 carries the post-translational modification 3',4'-dihydroxyphenylalanine. His75 contributes to the heme binding site.

The protein belongs to the truncated hemoglobin family. Group II subfamily. As to quaternary structure, homododecamer. Heme is required as a cofactor. In terms of processing, contains L-DOPA (3',4'-dihydroxyphenylalanine).

The protein is Group 2 truncated hemoglobin GlbO (glbO) of Mycobacterium bovis (strain ATCC BAA-935 / AF2122/97).